A 274-amino-acid polypeptide reads, in one-letter code: Rhamnulose-1-phosphate aldolase (274 aa).

Glu-117 is an active-site residue. 3 residues coordinate Zn(2+): His-141, His-143, and His-212.

This sequence belongs to the aldolase class II family. RhaD subfamily. As to quaternary structure, homotetramer. Requires Zn(2+) as cofactor.

The protein localises to the cytoplasm. It catalyses the reaction L-rhamnulose 1-phosphate = (S)-lactaldehyde + dihydroxyacetone phosphate. It functions in the pathway carbohydrate degradation; L-rhamnose degradation; glycerone phosphate from L-rhamnose: step 3/3. Its function is as follows. Catalyzes the reversible cleavage of L-rhamnulose-1-phosphate to dihydroxyacetone phosphate (DHAP) and L-lactaldehyde. The protein is Rhamnulose-1-phosphate aldolase of Shigella boydii serotype 4 (strain Sb227).